Consider the following 636-residue polypeptide: Endoglucanase 4 (636 aa).

An N-terminal signal peptide occupies residues 1–25 (MTRRWSFLVQCFTFKKKEGVRSRYM). Catalysis depends on Asp-82, which acts as the Nucleophile. Residues His-400, Asp-438, and Glu-447 contribute to the active site. Positions 478–635 (KVEDEFFVEA…GDLVFGTLPN (158 aa)) constitute a CBM3 domain.

It belongs to the glycosyl hydrolase 9 (cellulase E) family.

Its subcellular location is the secreted. It carries out the reaction Endohydrolysis of (1-&gt;4)-beta-D-glucosidic linkages in cellulose, lichenin and cereal beta-D-glucans.. This Bacillus sp. (strain KSM-522) protein is Endoglucanase 4.